The chain runs to 389 residues: UDP-D-apiose/UDP-D-xylose synthase 1 (389 aa).

Phe-28, Ile-29, Asp-49, Asn-76, Ile-77, and Leu-96 together coordinate NAD(+). The UDP-alpha-D-glucuronate site is built by Tyr-105, Thr-139, Glu-141, Arg-182, and Tyr-185. NAD(+)-binding residues include Tyr-185 and Lys-189. Residue Tyr-185 is the Proton acceptor of the active site. Asn-214 serves as a coordination point for UDP-alpha-D-glucuronate. NAD(+) contacts are provided by Trp-215 and Arg-235. UDP-alpha-D-glucuronate is bound by residues Lys-251, Val-253, Arg-260, Tyr-331, Tyr-335, Asp-337, and Arg-341.

It belongs to the NAD(P)-dependent epimerase/dehydratase family. As to quaternary structure, homodimer and heterodimer with AXS2. NAD(+) is required as a cofactor. Widely expressed with stronger expression in leaves and stems, and lower levels in flowers, siliques, pistils, pollen and roots.

It is found in the cytoplasm. It catalyses the reaction UDP-alpha-D-glucuronate + H(+) = UDP-alpha-D-xylose + CO2. The catalysed reaction is UDP-alpha-D-glucuronate + H(+) = UDP-alpha-D-apiose + CO2. Its activity is regulated as follows. Inhibited by UDP-D-galacturonate. Functionally, together with AXS2, catalyzes the conversion of UDP-D-glucuronate into a mixture of UDP-D-apiose (UDP-Api) as the main product and UDP-D-xylose to a lesser extent, via a cycle of oxidation and reduction. D-Apiose (3-C-hydroxymethyl-d-erythrose) is the only plant cell wall monosaccharide with a branched carbon skeleton and is found in rhamnogalacturonan II (RG-II), apiogalacturonan, and several apioglycosides. The protein is UDP-D-apiose/UDP-D-xylose synthase 1 of Arabidopsis thaliana (Mouse-ear cress).